Reading from the N-terminus, the 241-residue chain is 3-deoxy-D-manno-octulosonic acid kinase (241 aa).

Asp171 is a catalytic residue.

This sequence belongs to the protein kinase superfamily. KdkA/RfaP family.

Its subcellular location is the cell inner membrane. It carries out the reaction an alpha-Kdo-(2-&gt;6)-lipid IVA + ATP = a 4-O-phospho-alpha-Kdo-(2-&gt;6)-lipid IVA + ADP + H(+). It functions in the pathway bacterial outer membrane biogenesis; LPS core biosynthesis. In terms of biological role, catalyzes the ATP-dependent phosphorylation of the 3-deoxy-D-manno-octulosonic acid (Kdo) residue in Kdo-lipid IV(A) at the 4-OH position. This chain is 3-deoxy-D-manno-octulosonic acid kinase, found in Haemophilus influenzae (strain PittEE).